The sequence spans 222 residues: Bone marrow proteoglycan (222 aa).

The first 16 residues, 1-16 (MKLPLLLALLFGAVSA), serve as a signal peptide directing secretion. A propeptide spans 17 to 105 (LHLRSETSTF…VKVVGIPGCQ (89 aa)) (acidic). Thr23 carries O-linked (GalNAc...) threonine; partial glycosylation. O-linked (GalNAc...) serine glycosylation occurs at Ser24. Thr25 carries O-linked (GalNAc...) threonine glycosylation. The disordered stretch occupies residues 25 to 75 (TFETPLGAKTLPEDEETPEQEMEETPCRELEEEEEWGSGSEDASKKDGAVE). A glycan (O-linked (GalNAc...) threonine; partial) is linked at Thr34. Acidic residues predominate over residues 37-60 (EDEETPEQEMEETPCRELEEEEEW). An O-linked (Xyl...) (chondroitin sulfate) serine glycan is attached at Ser62. N-linked (GlcNAc...) asparagine glycosylation occurs at Asn86. In terms of domain architecture, C-type lectin spans 104–222 (CQTCRYLLVR…LRRLPFICSY (119 aa)). Disulfide bonds link Cys125–Cys220 and Cys197–Cys212.

In pregnancy serum, the proform exists as a disulfide-linked 2:2 heterotetramer with PAPPA, as a disulfide-linked 2:2 heterotetramer with AGT, and as a complex (probably a 2:2:2 heterohexamer) with AGT and C3dg. Post-translationally, nitrated. Detected in plasma and urine (at protein level). Detected in placenta (at protein level). High levels of the proform in placenta and pregnancy serum; in placenta, localized to X cells of septa and anchoring villi. Lower levels in a variety of other tissues including kidney, myometrium, endometrium, ovaries, breast, prostate, bone marrow and colon.

The protein localises to the secreted. Its subcellular location is the cytoplasmic vesicle. It localises to the secretory vesicle. Cytotoxin and helminthotoxin. Also induces non-cytolytic histamine release from human basophils. Involved in antiparasitic defense mechanisms and immune hypersensitivity reactions. The proform acts as a proteinase inhibitor, reducing the activity of PAPPA. This chain is Bone marrow proteoglycan (PRG2), found in Homo sapiens (Human).